The following is a 190-amino-acid chain: MNQQENNFVLADIVRALRQEEVIAYPTEAVFGLGCDPDSEKAVNTLLALKQRPWQKGLILVAANYAQLEPYINDSMLNEIQRETLFSTWPGPITWVIPARVETPQWLTGCFDSLAVRVSNHPLVQQLCAEYGKPLVSTSANLSGHEPCRTEEEVRIQFGPSLPVLSGHVGGRLNPSEIRDALTGKRFRQG.

One can recognise a YrdC-like domain in the interval 7–190; sequence NFVLADIVRA…ALTGKRFRQG (184 aa).

The protein belongs to the SUA5 family. TsaC subfamily.

The protein resides in the cytoplasm. It catalyses the reaction L-threonine + hydrogencarbonate + ATP = L-threonylcarbamoyladenylate + diphosphate + H2O. Functionally, required for the formation of a threonylcarbamoyl group on adenosine at position 37 (t(6)A37) in tRNAs that read codons beginning with adenine. Catalyzes the conversion of L-threonine, HCO(3)(-)/CO(2) and ATP to give threonylcarbamoyl-AMP (TC-AMP) as the acyladenylate intermediate, with the release of diphosphate. The sequence is that of Threonylcarbamoyl-AMP synthase from Yersinia pestis bv. Antiqua (strain Angola).